A 327-amino-acid chain; its full sequence is Transcription factor bHLH71 (327 aa).

Disordered stretches follow at residues 46–88 (ISEI…NQRM) and 151–176 (AKLN…HQPS). Over residues 65–76 (RGKKRRRRKPRV) the composition is skewed to basic residues. The segment covering 77 to 88 (CKNEEEAENQRM) has biased composition (basic and acidic residues). The bHLH domain maps to 85–136 (NQRMTHIAVERNRRRQMNQHLSVLRSLMPQPFAHKGDQASIVGGAIDFIKEL). The segment covering 152–169 (KLNQSVTSSTSQDSNGEQ) has biased composition (polar residues).

In terms of assembly, homodimer. Interacts with FAMA. In terms of tissue distribution, expressed in leaves, stems, and flowers.

The protein localises to the nucleus. In terms of biological role, transcription factor. May be involved in the differentiation of stomatal guard cells. The sequence is that of Transcription factor bHLH71 (BHLH71) from Arabidopsis thaliana (Mouse-ear cress).